The sequence spans 575 residues: DNA mismatch repair protein MutL (575 aa).

It belongs to the DNA mismatch repair MutL/HexB family.

Its function is as follows. This protein is involved in the repair of mismatches in DNA. It is required for dam-dependent methyl-directed DNA mismatch repair. May act as a 'molecular matchmaker', a protein that promotes the formation of a stable complex between two or more DNA-binding proteins in an ATP-dependent manner without itself being part of a final effector complex. This chain is DNA mismatch repair protein MutL, found in Dictyoglomus thermophilum (strain ATCC 35947 / DSM 3960 / H-6-12).